We begin with the raw amino-acid sequence, 425 residues long: Serine--tRNA ligase (425 aa).

230-232 (TAE) serves as a coordination point for L-serine. 261 to 263 (RSE) lines the ATP pocket. Glutamate 284 contributes to the L-serine binding site. ATP is bound at residue 348–351 (EISS). Serine 384 serves as a coordination point for L-serine.

This sequence belongs to the class-II aminoacyl-tRNA synthetase family. Type-1 seryl-tRNA synthetase subfamily. Homodimer. The tRNA molecule binds across the dimer.

The protein resides in the cytoplasm. It carries out the reaction tRNA(Ser) + L-serine + ATP = L-seryl-tRNA(Ser) + AMP + diphosphate + H(+). The catalysed reaction is tRNA(Sec) + L-serine + ATP = L-seryl-tRNA(Sec) + AMP + diphosphate + H(+). Its pathway is aminoacyl-tRNA biosynthesis; selenocysteinyl-tRNA(Sec) biosynthesis; L-seryl-tRNA(Sec) from L-serine and tRNA(Sec): step 1/1. Functionally, catalyzes the attachment of serine to tRNA(Ser). Is also able to aminoacylate tRNA(Sec) with serine, to form the misacylated tRNA L-seryl-tRNA(Sec), which will be further converted into selenocysteinyl-tRNA(Sec). In Streptococcus equi subsp. zooepidemicus (strain H70), this protein is Serine--tRNA ligase.